The primary structure comprises 100 residues: Putative pterin-4-alpha-carbinolamine dehydratase 2 (100 aa).

It belongs to the pterin-4-alpha-carbinolamine dehydratase family.

The enzyme catalyses (4aS,6R)-4a-hydroxy-L-erythro-5,6,7,8-tetrahydrobiopterin = (6R)-L-erythro-6,7-dihydrobiopterin + H2O. This chain is Putative pterin-4-alpha-carbinolamine dehydratase 2, found in Cupriavidus pinatubonensis (strain JMP 134 / LMG 1197) (Cupriavidus necator (strain JMP 134)).